A 266-amino-acid polypeptide reads, in one-letter code: Putative carbamate hydrolase RutD (266 aa).

The protein belongs to the AB hydrolase superfamily. Hydrolase RutD family.

The enzyme catalyses carbamate + 2 H(+) = NH4(+) + CO2. In terms of biological role, involved in pyrimidine catabolism. May facilitate the hydrolysis of carbamate, a reaction that can also occur spontaneously. This chain is Putative carbamate hydrolase RutD, found in Escherichia coli O111:H- (strain 11128 / EHEC).